A 123-amino-acid chain; its full sequence is Integration host factor subunit alpha (123 aa).

The interval 97-123 (NANGTASSMSSSANAAAGDKSESASGT) is disordered. Low complexity predominate over residues 102–113 (ASSMSSSANAAA).

Belongs to the bacterial histone-like protein family. In terms of assembly, heterodimer of an alpha and a beta chain.

In terms of biological role, this protein is one of the two subunits of integration host factor, a specific DNA-binding protein that functions in genetic recombination as well as in transcriptional and translational control. The polypeptide is Integration host factor subunit alpha (Rhodopseudomonas palustris (strain HaA2)).